A 576-amino-acid polypeptide reads, in one-letter code: MRTTQFFLSTTKEAPSEAELVSHKLMLRAGLIKRLGSGLYTWMPLGLRVLRRVEAVVREEMNRAGAIELLMPAVQPAELWQETGRWAQFGPQMLKIKDRHEREFCFGPTHEEVITDLARREIKSYRQLPLNFYQIQTKFRDEIRPRFGVMRAREFLMKDAYSFHASRESLAATYQAMYDAYGRIFTRLGLRFRAVAADTGAIGGSASHEFHVLADSGEDLIAYCPDSDYAANVELAEALAPAAARGAPQEAMREVETPKQTTCEDVAALLGIPLARTVKLIAVMAGERMVVVLLRGDHMLNEVKLAKIEGLADFRLANEAEIRAVFDCPPGFLGPVGIDRSTIRVIADRAVAVMSDFVCGANKPKFHLAGVNFGRDLQEPDLVADIRNVVAGDPSPDGKGTLALCRGIEVGHVFQLGNKYSQAMNATYLDEAGKAQAMEMGCYGIGVSRIVAAAVEQNHDGKGIVWPASMAPFSVVIVAIGYGKSASVKNAADTLYADLMAVGVEVLLDDRDERPGVMFADAELVGIPHRVTLGERGLNEGVVEYQPRRAAPEQGADARKIAVAEAKAFLMGVLGD.

The protein belongs to the class-II aminoacyl-tRNA synthetase family. ProS type 1 subfamily. As to quaternary structure, homodimer.

The protein resides in the cytoplasm. The enzyme catalyses tRNA(Pro) + L-proline + ATP = L-prolyl-tRNA(Pro) + AMP + diphosphate. In terms of biological role, catalyzes the attachment of proline to tRNA(Pro) in a two-step reaction: proline is first activated by ATP to form Pro-AMP and then transferred to the acceptor end of tRNA(Pro). As ProRS can inadvertently accommodate and process non-cognate amino acids such as alanine and cysteine, to avoid such errors it has two additional distinct editing activities against alanine. One activity is designated as 'pretransfer' editing and involves the tRNA(Pro)-independent hydrolysis of activated Ala-AMP. The other activity is designated 'posttransfer' editing and involves deacylation of mischarged Ala-tRNA(Pro). The misacylated Cys-tRNA(Pro) is not edited by ProRS. In Thiobacillus denitrificans (strain ATCC 25259 / T1), this protein is Proline--tRNA ligase.